Consider the following 161-residue polypeptide: Nucleotide-binding protein Ajs_2750 (161 aa).

This sequence belongs to the YajQ family.

Its function is as follows. Nucleotide-binding protein. The sequence is that of Nucleotide-binding protein Ajs_2750 from Acidovorax sp. (strain JS42).